The sequence spans 471 residues: Probable ribonuclease FAU-1 (471 aa).

The S1 motif domain maps to Gly-93 to Ile-139.

This sequence belongs to the FAU-1 family.

In terms of biological role, probable RNase involved in rRNA stability through maturation and/or degradation of precursor rRNAs. Binds to RNA in loop regions with AU-rich sequences. The protein is Probable ribonuclease FAU-1 of Halobacterium salinarum (strain ATCC 29341 / DSM 671 / R1).